A 262-amino-acid chain; its full sequence is ATP synthase subunit a (262 aa).

Helical transmembrane passes span 26–46 (VHID…FVFS), 86–106 (VAPL…IDLI), 130–150 (DISA…FYTI), 204–226 (LIFI…GIPL), and 240–260 (LQAF…YNKA).

Belongs to the ATPase A chain family. As to quaternary structure, F-type ATPases have 2 components, CF(1) - the catalytic core - and CF(0) - the membrane proton channel. CF(1) has five subunits: alpha(3), beta(3), gamma(1), delta(1), epsilon(1). CF(0) has three main subunits: a(1), b(2) and c(9-12). The alpha and beta chains form an alternating ring which encloses part of the gamma chain. CF(1) is attached to CF(0) by a central stalk formed by the gamma and epsilon chains, while a peripheral stalk is formed by the delta and b chains.

The protein resides in the cell inner membrane. In terms of biological role, key component of the proton channel; it plays a direct role in the translocation of protons across the membrane. This chain is ATP synthase subunit a, found in Haemophilus influenzae (strain PittEE).